The chain runs to 570 residues: PTS system lactose-specific EIICB component (570 aa).

In terms of domain architecture, PTS EIIC type-3 spans 9-410; that stretch reads IEKGKPFFEK…VVDIIIYYPF (402 aa). Helical transmembrane passes span 31-51, 65-85, 104-124, 133-153, 178-198, 223-243, 283-303, 340-360, and 382-402; these read GFIS…IAYV, AILM…VAGT, INFI…ASDP, AFMG…TVIV, FKDL…DLVI, GWIG…VGIH, MFIV…MFMW, VFFI…KLFV, and IIMG…LIVV. The PTS EIIB type-3 domain occupies 467 to 570; sequence QTNVLVLCAG…LDFVQQQFEN (104 aa). Catalysis depends on C474, which acts as the Phosphocysteine intermediate; for EIIB activity. The residue at position 474 (C474) is a Phosphocysteine; by EIIA.

It is found in the cell membrane. The catalysed reaction is lactose(out) + N(pros)-phospho-L-histidyl-[protein] = lactose 6-phosphate(in) + L-histidyl-[protein]. Its function is as follows. The phosphoenolpyruvate-dependent sugar phosphotransferase system (sugar PTS), a major carbohydrate active transport system, catalyzes the phosphorylation of incoming sugar substrates concomitantly with their translocation across the cell membrane. The enzyme II LacEF PTS system is involved in lactose transport. This Staphylococcus aureus (strain MSSA476) protein is PTS system lactose-specific EIICB component.